A 160-amino-acid chain; its full sequence is Myosin catalytic light chain LC-1, mantle muscle (160 aa).

Position 1 is a blocked amino end (Xaa) (Xaa1). 3 consecutive EF-hand domains span residues 7–44 (DEIE…LGMN), 83–118 (TAAD…LGER), and 119–153 (ITED…VMAG).

In molluscan muscle, calcium regulation is associated with myosin rather than with actin. Muscle myosin contains two types of light chains: the catalytic light chain, essential for ATPase activity, and the regulatory light chain, a calcium-binding protein responsible for Ca(2+) dependent binding and Ca(2+) dependent Mg-ATPase activity. The protein is Myosin catalytic light chain LC-1, mantle muscle of Todarodes pacificus (Japanese flying squid).